We begin with the raw amino-acid sequence, 343 residues long: L-threonine 3-dehydrogenase (343 aa).

Residue cysteine 38 participates in Zn(2+) binding. Catalysis depends on charge relay system residues threonine 40 and histidine 43. Zn(2+) contacts are provided by histidine 63, glutamate 64, cysteine 93, cysteine 96, cysteine 99, and cysteine 107. NAD(+)-binding positions include isoleucine 175, aspartate 195, arginine 200, leucine 262–leucine 264, and isoleucine 286–tyrosine 287.

It belongs to the zinc-containing alcohol dehydrogenase family. In terms of assembly, homotetramer. It depends on Zn(2+) as a cofactor.

Its subcellular location is the cytoplasm. The catalysed reaction is L-threonine + NAD(+) = (2S)-2-amino-3-oxobutanoate + NADH + H(+). It participates in amino-acid degradation; L-threonine degradation via oxydo-reductase pathway; glycine from L-threonine: step 1/2. Catalyzes the NAD(+)-dependent oxidation of L-threonine to 2-amino-3-ketobutyrate. This is L-threonine 3-dehydrogenase from Saccharopolyspora erythraea (strain ATCC 11635 / DSM 40517 / JCM 4748 / NBRC 13426 / NCIMB 8594 / NRRL 2338).